A 141-amino-acid chain; its full sequence is Ribonuclease P protein component (141 aa).

Disordered regions lie at residues 37–56 (RTEE…VGFT) and 114–141 (RRIT…VNGK). The span at 114 to 124 (RRITAKGERRS) shows a compositional bias: basic and acidic residues.

Belongs to the RnpA family. In terms of assembly, consists of a catalytic RNA component (M1 or rnpB) and a protein subunit.

It catalyses the reaction Endonucleolytic cleavage of RNA, removing 5'-extranucleotides from tRNA precursor.. In terms of biological role, RNaseP catalyzes the removal of the 5'-leader sequence from pre-tRNA to produce the mature 5'-terminus. It can also cleave other RNA substrates such as 4.5S RNA. The protein component plays an auxiliary but essential role in vivo by binding to the 5'-leader sequence and broadening the substrate specificity of the ribozyme. This Brucella melitensis biotype 1 (strain ATCC 23456 / CCUG 17765 / NCTC 10094 / 16M) protein is Ribonuclease P protein component.